Consider the following 282-residue polypeptide: Tetraspanin-6 (282 aa).

The Cytoplasmic portion of the chain corresponds to 1–7 (MYRFSNT). Residues 8-28 (VIGVLNLLTLLASIPIIGTAL) traverse the membrane as a helical segment. Topologically, residues 29-44 (YKARSSTTCENFLQTP) are extracellular. The chain crosses the membrane as a helical span at residues 45 to 65 (LLVIGFIILIVSLAGFIGACF). Topologically, residues 66-74 (NVAWALWVY) are cytoplasmic. Residues 75 to 95 (LVVMIFLIATLMGLTLFGLVV) traverse the membrane as a helical segment. The Extracellular segment spans residues 96 to 220 (TSQGGGVEVP…EIRLDWRKLS (125 aa)). The chain crosses the membrane as a helical span at residues 221–241 (VVNILVLVLLIAVYAAGCCAF). Topologically, residues 242–282 (HNTRHAAHPYHPSDDNRMTRVRPRWDYYWWRWWHEKKEQLY) are cytoplasmic.

Belongs to the tetraspanin (TM4SF) family.

The protein resides in the membrane. Its function is as follows. May be involved in the regulation of cell differentiation. The polypeptide is Tetraspanin-6 (TET6) (Arabidopsis thaliana (Mouse-ear cress)).